The chain runs to 433 residues: Isocitrate dehydrogenase [NADP], chloroplastic (433 aa).

A chloroplast-targeting transit peptide spans 1–21 (QFSPNLSFSAFFPIITFTTAT). Residues 98–100 (TIT) and arginine 105 each bind NADP(+). A substrate-binding site is contributed by threonine 100. Substrate is bound by residues 117 to 123 (SPNGTIR), arginine 132, and arginine 155. Aspartate 275 contributes to the Mn(2+) binding site. Lysine 283 provides a ligand contact to NADP(+). Aspartate 298 provides a ligand contact to Mn(2+). Residues 333–338 (GTVTRH) and asparagine 351 contribute to the NADP(+) site.

This sequence belongs to the isocitrate and isopropylmalate dehydrogenases family. Requires Mg(2+) as cofactor. The cofactor is Mn(2+). Detected in all tissues examined.

Its subcellular location is the plastid. It is found in the chloroplast. The enzyme catalyses D-threo-isocitrate + NADP(+) = 2-oxoglutarate + CO2 + NADPH. In Medicago sativa (Alfalfa), this protein is Isocitrate dehydrogenase [NADP], chloroplastic.